Here is a 260-residue protein sequence, read N- to C-terminus: Ribosomal RNA small subunit methyltransferase A (260 aa).

Asparagine 16, leucine 18, glycine 43, glutamate 64, aspartate 86, and asparagine 108 together coordinate S-adenosyl-L-methionine.

It belongs to the class I-like SAM-binding methyltransferase superfamily. rRNA adenine N(6)-methyltransferase family. RsmA subfamily.

The protein resides in the cytoplasm. It catalyses the reaction adenosine(1518)/adenosine(1519) in 16S rRNA + 4 S-adenosyl-L-methionine = N(6)-dimethyladenosine(1518)/N(6)-dimethyladenosine(1519) in 16S rRNA + 4 S-adenosyl-L-homocysteine + 4 H(+). Specifically dimethylates two adjacent adenosines (A1518 and A1519) in the loop of a conserved hairpin near the 3'-end of 16S rRNA in the 30S particle. May play a critical role in biogenesis of 30S subunits. The polypeptide is Ribosomal RNA small subunit methyltransferase A (Buchnera aphidicola subsp. Baizongia pistaciae (strain Bp)).